A 403-amino-acid chain; its full sequence is Phosphopentomutase (403 aa).

Mn(2+) contacts are provided by Asp13, Asp298, His303, Asp339, His340, and His351.

The protein belongs to the phosphopentomutase family. Mn(2+) serves as cofactor.

The protein resides in the cytoplasm. It catalyses the reaction 2-deoxy-alpha-D-ribose 1-phosphate = 2-deoxy-D-ribose 5-phosphate. The enzyme catalyses alpha-D-ribose 1-phosphate = D-ribose 5-phosphate. It functions in the pathway carbohydrate degradation; 2-deoxy-D-ribose 1-phosphate degradation; D-glyceraldehyde 3-phosphate and acetaldehyde from 2-deoxy-alpha-D-ribose 1-phosphate: step 1/2. Isomerase that catalyzes the conversion of deoxy-ribose 1-phosphate (dRib-1-P) and ribose 1-phosphate (Rib-1-P) to deoxy-ribose 5-phosphate (dRib-5-P) and ribose 5-phosphate (Rib-5-P), respectively. This is Phosphopentomutase from Streptococcus suis (strain 05ZYH33).